Reading from the N-terminus, the 133-residue chain is Large-conductance mechanosensitive channel (133 aa).

2 consecutive transmembrane segments (helical) span residues 10–30 (FAMRGNVVDMAVGVIIGGAFG) and 76–96 (GAFIQTVFDFVIIAFAIFLMI).

This sequence belongs to the MscL family. Homopentamer.

The protein resides in the cell inner membrane. In terms of biological role, channel that opens in response to stretch forces in the membrane lipid bilayer. May participate in the regulation of osmotic pressure changes within the cell. In Pasteurella multocida (strain Pm70), this protein is Large-conductance mechanosensitive channel.